An 89-amino-acid chain; its full sequence is MAQEIKMVYDTVKQGLSQLKNSAELKSSLPGHLSGRNHLNVVKSIEQLNKDIKELTEAYASVLAKHIAQTESAVNAMKETDENISSSMK.

The protein is Protein YxiC (yxiC) of Bacillus subtilis (strain 168).